The chain runs to 104 residues: Large ribosomal subunit protein bL21 (104 aa).

Belongs to the bacterial ribosomal protein bL21 family. In terms of assembly, part of the 50S ribosomal subunit. Contacts protein L20.

Its function is as follows. This protein binds to 23S rRNA in the presence of protein L20. This is Large ribosomal subunit protein bL21 from Desulfosudis oleivorans (strain DSM 6200 / JCM 39069 / Hxd3) (Desulfococcus oleovorans).